A 705-amino-acid chain; its full sequence is Translation initiation factor IF-2 (705 aa).

A disordered region spans residues 40 to 124 (DDQIKALDKK…QPAAPKEIPS (85 aa)). Residues 41 to 58 (DQIKALDKKFKKEQKNDN) show a composition bias toward basic and acidic residues. Residues 59–77 (KQSTQNNHQKSNNQNQNKG) show a composition bias toward low complexity. The segment covering 94-108 (KGNKKNNRNNKKNNK) has biased composition (basic residues). A tr-type G domain is found at 207–376 (ERPAVVTIMG…GLVAEVQELK (170 aa)). Residues 216-223 (GHVDHGKT) are G1. Residue 216–223 (GHVDHGKT) participates in GTP binding. Positions 241 to 245 (GITQH) are G2. Positions 262 to 265 (DTPG) are G3. GTP contacts are provided by residues 262–266 (DTPGH) and 316–319 (NKID). Residues 316–319 (NKID) are G4. Residues 352–354 (SAL) form a G5 region.

The protein belongs to the TRAFAC class translation factor GTPase superfamily. Classic translation factor GTPase family. IF-2 subfamily.

It is found in the cytoplasm. One of the essential components for the initiation of protein synthesis. Protects formylmethionyl-tRNA from spontaneous hydrolysis and promotes its binding to the 30S ribosomal subunits. Also involved in the hydrolysis of GTP during the formation of the 70S ribosomal complex. This is Translation initiation factor IF-2 from Staphylococcus aureus (strain MRSA252).